Here is a 99-residue protein sequence, read N- to C-terminus: Integration host factor subunit alpha (99 aa).

The protein belongs to the bacterial histone-like protein family. Heterodimer of an alpha and a beta chain.

This protein is one of the two subunits of integration host factor, a specific DNA-binding protein that functions in genetic recombination as well as in transcriptional and translational control. The chain is Integration host factor subunit alpha from Pseudoalteromonas translucida (strain TAC 125).